The following is a 422-amino-acid chain: Light-independent protochlorophyllide reductase subunit N (422 aa).

3 residues coordinate [4Fe-4S] cluster: Cys26, Cys51, and Cys112.

Belongs to the BchN/ChlN family. Protochlorophyllide reductase is composed of three subunits; BchL, BchN and BchB. Forms a heterotetramer of two BchB and two BchN subunits. It depends on [4Fe-4S] cluster as a cofactor.

It carries out the reaction chlorophyllide a + oxidized 2[4Fe-4S]-[ferredoxin] + 2 ADP + 2 phosphate = protochlorophyllide a + reduced 2[4Fe-4S]-[ferredoxin] + 2 ATP + 2 H2O. It functions in the pathway porphyrin-containing compound metabolism; bacteriochlorophyll biosynthesis (light-independent). In terms of biological role, component of the dark-operative protochlorophyllide reductase (DPOR) that uses Mg-ATP and reduced ferredoxin to reduce ring D of protochlorophyllide (Pchlide) to form chlorophyllide a (Chlide). This reaction is light-independent. The NB-protein (BchN-BchB) is the catalytic component of the complex. This is Light-independent protochlorophyllide reductase subunit N from Acidiphilium rubrum.